The primary structure comprises 135 residues: MLSPKRTRFRKQHRGRMKGISYRGNRICFGRYALQALEPAWITSRQIEAGRRAMTRNVRRGGKIWVRIFPDKPVTVRPTETRMGSGKGSPEYWVAVVKPGRILYEMSGVAENIARKAISIVASKMPIKTQFIISG.

Belongs to the universal ribosomal protein uL16 family. In terms of assembly, part of the 50S ribosomal subunit.

The protein localises to the plastid. It localises to the chloroplast. This Gossypium barbadense (Sea Island cotton) protein is Large ribosomal subunit protein uL16c.